A 77-amino-acid polypeptide reads, in one-letter code: DNA-directed RNA polymerase subunit epsilon (77 aa).

The protein belongs to the RNA polymerase subunit epsilon family. RNAP is composed of a core of 2 alpha, a beta and a beta' subunit. The core is associated with a delta subunit, and at least one of epsilon or omega. When a sigma factor is associated with the core the holoenzyme is formed, which can initiate transcription.

It carries out the reaction RNA(n) + a ribonucleoside 5'-triphosphate = RNA(n+1) + diphosphate. A non-essential component of RNA polymerase (RNAP). This Lactobacillus delbrueckii subsp. bulgaricus (strain ATCC 11842 / DSM 20081 / BCRC 10696 / JCM 1002 / NBRC 13953 / NCIMB 11778 / NCTC 12712 / WDCM 00102 / Lb 14) protein is DNA-directed RNA polymerase subunit epsilon.